The following is a 241-amino-acid chain: Adenosylcobinamide-GDP ribazoletransferase (241 aa).

The next 4 helical transmembrane spans lie at 34–54 (LGLP…AWAF), 108–128 (VGGL…FGWI), 184–206 (LPFS…WTCL), and 220–240 (FLGA…SSLP).

The protein belongs to the CobS family. The cofactor is Mg(2+).

The protein resides in the cell membrane. It catalyses the reaction alpha-ribazole + adenosylcob(III)inamide-GDP = adenosylcob(III)alamin + GMP + H(+). The catalysed reaction is alpha-ribazole 5'-phosphate + adenosylcob(III)inamide-GDP = adenosylcob(III)alamin 5'-phosphate + GMP + H(+). Its pathway is cofactor biosynthesis; adenosylcobalamin biosynthesis; adenosylcobalamin from cob(II)yrinate a,c-diamide: step 7/7. Joins adenosylcobinamide-GDP and alpha-ribazole to generate adenosylcobalamin (Ado-cobalamin). Also synthesizes adenosylcobalamin 5'-phosphate from adenosylcobinamide-GDP and alpha-ribazole 5'-phosphate. This chain is Adenosylcobinamide-GDP ribazoletransferase, found in Methanopyrus kandleri (strain AV19 / DSM 6324 / JCM 9639 / NBRC 100938).